A 147-amino-acid polypeptide reads, in one-letter code: Catabolic 3-dehydroquinase 2 (147 aa).

The Proton acceptor role is filled by tyrosine 23. Positions 74, 80, and 87 each coordinate substrate. The active-site Proton donor is histidine 100. Residues 101–102 and arginine 111 each bind substrate; that span reads IT.

It belongs to the type-II 3-dehydroquinase family. In terms of assembly, homododecamer. Adopts a ring-like structure, composed of an arrangement of two hexameric rings stacked on top of one another.

It carries out the reaction 3-dehydroquinate = 3-dehydroshikimate + H2O. It functions in the pathway aromatic compound metabolism; 3,4-dihydroxybenzoate biosynthesis; 3,4-dihydroxybenzoate from 3-dehydroquinate: step 1/2. Is involved in the catabolism of quinate. Allows the utilization of quinate as carbon source via the beta-ketoadipate pathway. The chain is Catabolic 3-dehydroquinase 2 from Aspergillus terreus (strain NIH 2624 / FGSC A1156).